The chain runs to 339 residues: tRNA-splicing endonuclease (339 aa).

Active-site residues include Y274, H285, and K316.

The protein belongs to the tRNA-intron endonuclease family. Archaeal long subfamily. In terms of assembly, homodimer. Ca(2+) is required as a cofactor. The cofactor is Mg(2+). The N-terminus is blocked.

The catalysed reaction is pretRNA = a 3'-half-tRNA molecule with a 5'-OH end + a 5'-half-tRNA molecule with a 2',3'-cyclic phosphate end + an intron with a 2',3'-cyclic phosphate and a 5'-hydroxyl terminus.. Functionally, endonuclease that removes tRNA introns. Cleaves pre-tRNA at the 5'- and 3'-splice sites to release the intron. The products are an intron and two tRNA half-molecules bearing 2',3' cyclic phosphate and 5'-OH termini. Recognizes a pseudosymmetric substrate in which 2 bulged loops of 3 bases are separated by a stem of 4 bp. This chain is tRNA-splicing endonuclease, found in Haloferax volcanii (strain ATCC 29605 / DSM 3757 / JCM 8879 / NBRC 14742 / NCIMB 2012 / VKM B-1768 / DS2) (Halobacterium volcanii).